Here is a 321-residue protein sequence, read N- to C-terminus: tRNA uridine(34) hydroxylase (321 aa).

Positions aspartate 135 to serine 233 constitute a Rhodanese domain. Cysteine 193 (cysteine persulfide intermediate) is an active-site residue. Residues arginine 301 to leucine 321 are disordered.

This sequence belongs to the TrhO family.

The enzyme catalyses uridine(34) in tRNA + AH2 + O2 = 5-hydroxyuridine(34) in tRNA + A + H2O. In terms of biological role, catalyzes oxygen-dependent 5-hydroxyuridine (ho5U) modification at position 34 in tRNAs. This chain is tRNA uridine(34) hydroxylase, found in Parasynechococcus marenigrum (strain WH8102).